Here is a 479-residue protein sequence, read N- to C-terminus: Glutamyl-tRNA(Gln) amidotransferase subunit A (479 aa).

Catalysis depends on charge relay system residues lysine 71 and serine 146. Residue serine 170 is the Acyl-ester intermediate of the active site.

It belongs to the amidase family. GatA subfamily. In terms of assembly, heterotrimer of A, B and C subunits.

The catalysed reaction is L-glutamyl-tRNA(Gln) + L-glutamine + ATP + H2O = L-glutaminyl-tRNA(Gln) + L-glutamate + ADP + phosphate + H(+). In terms of biological role, allows the formation of correctly charged Gln-tRNA(Gln) through the transamidation of misacylated Glu-tRNA(Gln) in organisms which lack glutaminyl-tRNA synthetase. The reaction takes place in the presence of glutamine and ATP through an activated gamma-phospho-Glu-tRNA(Gln). The sequence is that of Glutamyl-tRNA(Gln) amidotransferase subunit A from Lactobacillus gasseri (strain ATCC 33323 / DSM 20243 / BCRC 14619 / CIP 102991 / JCM 1131 / KCTC 3163 / NCIMB 11718 / NCTC 13722 / AM63).